The chain runs to 399 residues: Developmentally-regulated G-protein 1 (399 aa).

The region spanning 63–288 is the OBG-type G domain; sequence GRVALIGFPS…LLARMWDEMG (226 aa). Residues 69–76, 115–119, and 246–249 contribute to the GTP site; these read GFPSVGKS, DLPGI, and NKID. The TGS domain occupies 288-366; it reads GLVRVYSKPQ…EDEDVVQIVK (79 aa). The tract at residues 367–399 is disordered; sequence KKERDEGGRGRFKSHSNAPARIADREKKAPLKQ. Basic and acidic residues predominate over residues 388-399; sequence IADREKKAPLKQ.

It belongs to the TRAFAC class OBG-HflX-like GTPase superfamily. OBG GTPase family. In terms of tissue distribution, expressed in actively growing tissues and reproductive organs. Mostly expressed in leaves, stems and siliques. Also present in flowers and flower buds, and, to a lower extent, in roots.

It localises to the cytoplasmic vesicle. It is found in the cytoplasm. Its function is as follows. Binds GDP and GTP, and has low GTPase activity. May interact with phosphatidic acid (PA). The polypeptide is Developmentally-regulated G-protein 1 (DRG1) (Arabidopsis thaliana (Mouse-ear cress)).